Consider the following 155-residue polypeptide: 6,7-dimethyl-8-ribityllumazine synthase (155 aa).

5-amino-6-(D-ribitylamino)uracil is bound by residues Phe24, 58–60, and 82–84; these read AFE and VLI. 87-88 contributes to the (2S)-2-hydroxy-3-oxobutyl phosphate binding site; sequence AT. His90 serves as the catalytic Proton donor. Residue Phe115 participates in 5-amino-6-(D-ribitylamino)uracil binding. Arg129 serves as a coordination point for (2S)-2-hydroxy-3-oxobutyl phosphate.

It belongs to the DMRL synthase family.

It carries out the reaction (2S)-2-hydroxy-3-oxobutyl phosphate + 5-amino-6-(D-ribitylamino)uracil = 6,7-dimethyl-8-(1-D-ribityl)lumazine + phosphate + 2 H2O + H(+). It functions in the pathway cofactor biosynthesis; riboflavin biosynthesis; riboflavin from 2-hydroxy-3-oxobutyl phosphate and 5-amino-6-(D-ribitylamino)uracil: step 1/2. Functionally, catalyzes the formation of 6,7-dimethyl-8-ribityllumazine by condensation of 5-amino-6-(D-ribitylamino)uracil with 3,4-dihydroxy-2-butanone 4-phosphate. This is the penultimate step in the biosynthesis of riboflavin. This chain is 6,7-dimethyl-8-ribityllumazine synthase, found in Chloroherpeton thalassium (strain ATCC 35110 / GB-78).